A 444-amino-acid polypeptide reads, in one-letter code: MAPSIQSLSMIHDSQECIKPIPAFYCCYLLRSCVRHASLYIGSTPDPARRLAQHNGDRNGAAKRTLRENLRPWEMVAIVSGFTSRVAALQFEWAWQNTKVSRHADLDGNVIQELGVRICPRTGKGVKGTAKPRTSLTNILANLHLLLRSPYFSKWPVEVRFFSADVHRVWQVWLQRVDGLLNDGIRVVTDFALDGISEVERKELLAGAGRVGTLDVGYNSIKEYVEKSQFLLEDGERINCGVCKQRLILQHDIIAVCSHSSCHCAAHLSCLSSHFLKDKDSDSELIPREGTCPACYGKLEWLTMMKEISLRLRGQEEVNRLFRRRRQAGTPKGQGLKSVRGRGRGHSEDESDALQVSTGLDIVDLTPCSDDPWTIDCAIGELGGIAHRPGGESSGNDSDATITPEMETPPQRRRRNQNTRTQRLGLQKSATINLSDWDDAEVIE.

A GIY-YIG domain is found at 23-105 (AFYCCYLLRS…QNTKVSRHAD (83 aa)). The segment at 240–295 (CGVCKQRLILQHDIIAVCSHSSCHCAAHLSCLSSHFLKDKDSDSELIPREGTCPAC) adopts an SLX1-type zinc-finger fold. Disordered stretches follow at residues 323–355 (RRRR…DALQ) and 386–444 (AHRP…EVIE).

Belongs to the SLX1 family. As to quaternary structure, forms a heterodimer with SLX4. Requires a divalent metal cation as cofactor.

The protein localises to the nucleus. Functionally, catalytic subunit of the SLX1-SLX4 structure-specific endonuclease that resolves DNA secondary structures generated during DNA repair and recombination. Has endonuclease activity towards branched DNA substrates, introducing single-strand cuts in duplex DNA close to junctions with ss-DNA. This is Structure-specific endonuclease subunit SLX1 from Paracoccidioides brasiliensis (strain Pb18).